The primary structure comprises 100 residues: Aspartyl/glutamyl-tRNA(Asn/Gln) amidotransferase subunit C (100 aa).

Belongs to the GatC family. Heterotrimer of A, B and C subunits.

It carries out the reaction L-glutamyl-tRNA(Gln) + L-glutamine + ATP + H2O = L-glutaminyl-tRNA(Gln) + L-glutamate + ADP + phosphate + H(+). It catalyses the reaction L-aspartyl-tRNA(Asn) + L-glutamine + ATP + H2O = L-asparaginyl-tRNA(Asn) + L-glutamate + ADP + phosphate + 2 H(+). Functionally, allows the formation of correctly charged Asn-tRNA(Asn) or Gln-tRNA(Gln) through the transamidation of misacylated Asp-tRNA(Asn) or Glu-tRNA(Gln) in organisms which lack either or both of asparaginyl-tRNA or glutaminyl-tRNA synthetases. The reaction takes place in the presence of glutamine and ATP through an activated phospho-Asp-tRNA(Asn) or phospho-Glu-tRNA(Gln). The polypeptide is Aspartyl/glutamyl-tRNA(Asn/Gln) amidotransferase subunit C (Streptococcus pneumoniae (strain P1031)).